The following is a 378-amino-acid chain: Pyrimidine monooxygenase RutA (378 aa).

Residues 65-66, asparagine 131, glutamate 140, 156-157, and serine 206 each bind FMN; these read IK and RY.

The protein belongs to the NtaA/SnaA/DszA monooxygenase family. RutA subfamily.

It catalyses the reaction uracil + FMNH2 + NADH + O2 = (Z)-3-ureidoacrylate + FMN + NAD(+) + H2O + H(+). It carries out the reaction thymine + FMNH2 + NADH + O2 = (Z)-2-methylureidoacrylate + FMN + NAD(+) + H2O + H(+). Functionally, catalyzes the pyrimidine ring opening between N-3 and C-4 by an unusual flavin hydroperoxide-catalyzed mechanism, adding oxygen atoms in the process to yield ureidoacrylate peracid, that immediately reacts with FMN forming ureidoacrylate and FMN-N(5)-oxide. The FMN-N(5)-oxide reacts spontaneously with NADH to produce FMN. Requires the flavin reductase RutF to regenerate FMN in vivo. This chain is Pyrimidine monooxygenase RutA, found in Cronobacter turicensis (strain DSM 18703 / CCUG 55852 / LMG 23827 / z3032).